The sequence spans 130 residues: Follitropin subunit beta (130 aa).

The N-terminal stretch at 1–20 is a signal peptide; that stretch reads MMKLIQLCILFWCWRAICCH. 6 cysteine pairs are disulfide-bonded: Cys-22/Cys-70, Cys-36/Cys-85, Cys-39/Cys-123, Cys-47/Cys-101, Cys-51/Cys-103, and Cys-106/Cys-113. Residues Asn-26 and Asn-43 are each glycosylated (N-linked (GlcNAc...) asparagine).

It belongs to the glycoprotein hormones subunit beta family. In terms of assembly, heterodimer. The active follitropin is a heterodimer composed of an alpha chain/CGA shared with other hormones and a unique beta chain/FSHB shown here.

The protein resides in the secreted. Together with the alpha chain CGA constitutes follitropin, the follicle-stimulating hormone, and provides its biological specificity to the hormone heterodimer. Binds FSHR, a G protein-coupled receptor, on target cells to activate downstream signaling pathways. Follitropin is involved in follicle development and spermatogenesis in reproductive organs. The sequence is that of Follitropin subunit beta (Fshb) from Mus musculus (Mouse).